Here is a 158-residue protein sequence, read N- to C-terminus: Cyclic pyranopterin monophosphate synthase (158 aa).

Substrate is bound by residues 74–76 (MCH) and 112–113 (ME). Asp-127 is an active-site residue.

It belongs to the MoaC family. As to quaternary structure, homohexamer; trimer of dimers.

The catalysed reaction is (8S)-3',8-cyclo-7,8-dihydroguanosine 5'-triphosphate = cyclic pyranopterin phosphate + diphosphate. It functions in the pathway cofactor biosynthesis; molybdopterin biosynthesis. In terms of biological role, catalyzes the conversion of (8S)-3',8-cyclo-7,8-dihydroguanosine 5'-triphosphate to cyclic pyranopterin monophosphate (cPMP). This Helicobacter pylori (strain HPAG1) protein is Cyclic pyranopterin monophosphate synthase.